Here is a 250-residue protein sequence, read N- to C-terminus: Carboxymethylproline synthase (250 aa).

Malonyl-CoA is bound at residue 60–64 (AGGDF).

The protein belongs to the enoyl-CoA hydratase/isomerase family. Homotrimer.

The catalysed reaction is (S)-1-pyrroline-5-carboxylate + malonyl-CoA + H2O + H(+) = (2S,5S)-5-carboxymethylproline + CO2 + CoA. Its pathway is antibiotic biosynthesis; carbapenem biosynthesis. Functionally, catalyzes the formation of (2S,5S)-carboxymethylproline (t-CMP) from malonyl-CoA and (S)-1-pyrroline-5-carboxylate, the first step in the biosynthesis of (5R)-carbapen-2-em-3-carboxylate, a beta-lactam antibiotic of the carbapenem class. Also catalyzes the independent decarboxylation of malonyl-CoA and methylmalonyl-CoA and the hydrolysis of CoA esters such as acetyl-CoA and propionyl-CoA. Catalyzes the reaction with a C2 epimeric mixture of methylmalonyl-CoA to give a 55:45 mixture of (6R)- and (6S)-epimers of 6-methyl-t-CMP, under standard incubation conditions. This is Carboxymethylproline synthase from Pectobacterium carotovorum subsp. carotovorum (Erwinia carotovora subsp. carotovora).